The chain runs to 396 residues: Probable isocitrate dehydrogenase [NAD] gamma 2, mitochondrial (396 aa).

The N-terminal 25 residues, 1–25 (MLAVTSCSMKTVLQYAVFLGHSREV), are a transit peptide targeting the mitochondrion. Thr117 provides a ligand contact to citrate. Residues Arg133, Arg164, and Asp251 each coordinate substrate. Mn(2+) is bound at residue Asp251. Asn321 lines the ADP pocket.

This sequence belongs to the isocitrate and isopropylmalate dehydrogenases family. As to quaternary structure, heterooligomer of subunits alpha (IDH3A), beta (IDH3B), and gamma (IDH3G) in the apparent ratio of 2:1:1. The heterodimer containing one IDH3A and one IDH3B subunit and the heterodimer containing one IDH3A and one IDH3G subunit assemble into a heterotetramer (which contains two subunits of IDH3A, one of IDH3B and one of IDH3G) and further into the heterooctamer. Mg(2+) is required as a cofactor. The cofactor is Mn(2+).

The protein resides in the mitochondrion. Its activity is regulated as follows. The heterotetramer and the heterodimer composed of IDH3A and IDH3G subunits can be allosterically activated by citrate (CIT) or/and ADP, and the two activators can act independently or synergistically. The heterodimer composed of IDH3A and IDH3B subunits cannot be allosterically regulated and the allosteric regulation of the heterotetramer is through the IDH3G subunit and not the IDH3B subunit. The IDH3G subunit contains the allosteric site which consists of a CIT-binding site and an ADP-binding site, and the binding of CIT and ADP causes conformational changes at the allosteric site which are transmitted to the active site in the catalytic subunit (IDH3A) through a cascade of conformational changes at the heterodimer interface, leading to stabilization of the isocitrate-binding at the active site and thus activation of the enzyme. ATP can activate the heterotetramer and the heterodimer composed of IDH3A and IDH3G subunits at low concentrations but inhibits their activities at high concentrations, whereas ATP exhibits only inhibitory effect on the heterodimer composed of IDH3A and IDH3B subunits. Regulatory subunit which plays a role in the allosteric regulation of the enzyme catalyzing the decarboxylation of isocitrate (ICT) into alpha-ketoglutarate. The heterodimer composed of the alpha (IDH3A) and beta (IDH3B) subunits and the heterodimer composed of the alpha (IDH3A) and gamma (IDH3G) subunits, have considerable basal activity but the full activity of the heterotetramer (containing two subunits of IDH3A, one of IDH3B and one of IDH3G) requires the assembly and cooperative function of both heterodimers. The sequence is that of Probable isocitrate dehydrogenase [NAD] gamma 2, mitochondrial from Mus musculus (Mouse).